The sequence spans 418 residues: Argininosuccinate synthase (418 aa).

16–24 (AYSGGLDTS) lines the ATP pocket. An L-citrulline-binding site is contributed by tyrosine 95. Glycine 125 is an ATP binding site. Residues threonine 127, asparagine 131, and aspartate 132 each contribute to the L-aspartate site. Asparagine 131 contacts L-citrulline. L-citrulline-binding residues include arginine 135, serine 183, glutamate 267, and tyrosine 279.

This sequence belongs to the argininosuccinate synthase family. Type 1 subfamily. In terms of assembly, homotetramer.

It localises to the cytoplasm. It catalyses the reaction L-citrulline + L-aspartate + ATP = 2-(N(omega)-L-arginino)succinate + AMP + diphosphate + H(+). The protein operates within amino-acid biosynthesis; L-arginine biosynthesis; L-arginine from L-ornithine and carbamoyl phosphate: step 2/3. This chain is Argininosuccinate synthase, found in Bifidobacterium adolescentis (strain ATCC 15703 / DSM 20083 / NCTC 11814 / E194a).